We begin with the raw amino-acid sequence, 345 residues long: Telomere-binding protein cav (345 aa).

Residues 115–337 are required for binding to Su(var)205; the sequence is RRKMVQPYPE…TITFQNTESE (223 aa). Disordered regions lie at residues 145-180 and 200-231; these read RLDR…HEDQ and PPGV…INRP. 2 short sequence motifs (su(var)205-binding Pro-containing repeat) span residues 231 to 237 and 298 to 304; these read PETEINE and PETEMNE.

In terms of assembly, component of the HipHop-HOAP telomere capping complex, composed of at least HipHop and cav/HOAP, and may include Su(var)205/HP1; HipHop and cav/HOAP, but not Su(var)205, are interdependent for their protein stability. Interacts with HipHop (via N-terminus). Interacts (via C-terminus) with Su(var)205/HP1 dimer (via hinge and chromoshadow domain) and Orc1; possibly interacts with other components of the origin recognition complex (ORC). Each molecule of cav/HOAP interacts with 2 molecules of Su(var)205/HP1. The HipHop-HOAP complex recruits the MTV complex, consisting of moi/modigliani, tea and ver/verrocchio, to telomeres, forming the terminin telomere-capping complex. Interacts with moi/modigliani; the interaction is direct. Interacts with ver/verrochio; the interaction is direct. Interacts with HP6, which is also part of the terminin complex. Interacts (via N-terminus) with peo/pendolino (via N-terminus); the interaction is direct.

The protein localises to the nucleus. The protein resides in the chromosome. It localises to the telomere. Part of the HipHop-HOAP complex that recruits the MTV complex to form the terminin telomere-capping complex, which binds to chromosome ends in a sequence-independent manner and prevents telomere fusion. Telomere capping is independent of the origin recognition complex (ORC). The sequence is that of Telomere-binding protein cav from Drosophila melanogaster (Fruit fly).